Here is a 254-residue protein sequence, read N- to C-terminus: Glycerol operon regulatory protein (254 aa).

The 63-residue stretch at 5–67 (IQSLERAAAM…PASGRYQLGA (63 aa)) folds into the HTH iclR-type domain. The H-T-H motif DNA-binding region spans 27–46 (LSDIASTLGLAKGTAHGILR). Residues 82–251 (LRARALVWTD…AAAVSRDLGA (170 aa)) enclose the IclR-ED domain.

May be an activator protein for the gylABX operon. In Streptomyces griseus, this protein is Glycerol operon regulatory protein (gylR).